We begin with the raw amino-acid sequence, 193 residues long: dCTP deaminase (193 aa).

DCTP is bound by residues 110 to 115 (RSSLAR), Asp128, 136 to 138 (VLE), Tyr171, Lys178, and Gln182. The Proton donor/acceptor role is filled by Glu138. The tract at residues 169–193 (RPYNRRQDAKYRDQQGAVASRIDKD) is disordered.

This sequence belongs to the dCTP deaminase family. In terms of assembly, homotrimer.

It catalyses the reaction dCTP + H2O + H(+) = dUTP + NH4(+). It participates in pyrimidine metabolism; dUMP biosynthesis; dUMP from dCTP (dUTP route): step 1/2. Catalyzes the deamination of dCTP to dUTP. This Salmonella arizonae (strain ATCC BAA-731 / CDC346-86 / RSK2980) protein is dCTP deaminase.